The chain runs to 332 residues: Glyceraldehyde-3-phosphate dehydrogenase 1 (332 aa).

NAD(+) is bound by residues R11–I12, D33, and R78. D-glyceraldehyde 3-phosphate contacts are provided by residues S149–T151, T180, T209–G210, and R232. The active-site Nucleophile is the C150. NAD(+) is bound at residue N314.

The protein belongs to the glyceraldehyde-3-phosphate dehydrogenase family. As to quaternary structure, homotetramer.

The protein resides in the cytoplasm. It catalyses the reaction D-glyceraldehyde 3-phosphate + phosphate + NAD(+) = (2R)-3-phospho-glyceroyl phosphate + NADH + H(+). It participates in carbohydrate degradation; glycolysis; pyruvate from D-glyceraldehyde 3-phosphate: step 1/5. This is Glyceraldehyde-3-phosphate dehydrogenase 1 (GPD1) from Candida glabrata (strain ATCC 2001 / BCRC 20586 / JCM 3761 / NBRC 0622 / NRRL Y-65 / CBS 138) (Yeast).